The primary structure comprises 72 residues: UPF0270 protein KPN78578_37030 (72 aa).

The protein belongs to the UPF0270 family.

The protein is UPF0270 protein KPN78578_37030 of Klebsiella pneumoniae subsp. pneumoniae (strain ATCC 700721 / MGH 78578).